Here is a 183-residue protein sequence, read N- to C-terminus: Nucleoside triphosphate pyrophosphatase (183 aa).

The active-site Proton acceptor is Asp71.

Belongs to the Maf family. A divalent metal cation serves as cofactor.

Its subcellular location is the cytoplasm. The enzyme catalyses a ribonucleoside 5'-triphosphate + H2O = a ribonucleoside 5'-phosphate + diphosphate + H(+). The catalysed reaction is a 2'-deoxyribonucleoside 5'-triphosphate + H2O = a 2'-deoxyribonucleoside 5'-phosphate + diphosphate + H(+). Its function is as follows. Nucleoside triphosphate pyrophosphatase. May have a dual role in cell division arrest and in preventing the incorporation of modified nucleotides into cellular nucleic acids. This Campylobacter jejuni subsp. jejuni serotype O:6 (strain 81116 / NCTC 11828) protein is Nucleoside triphosphate pyrophosphatase.